Here is a 715-residue protein sequence, read N- to C-terminus: Fatty acid oxidation complex subunit alpha (715 aa).

Residues Met-1 to Ala-190 are enoyl-CoA hydratase/isomerase. Asp-297 serves as a coordination point for substrate. Residues His-312 to Asn-715 form a 3-hydroxyacyl-CoA dehydrogenase region. Residues Met-325, Asp-344, Val-401–Glu-403, Lys-408, and Ser-430 each bind NAD(+). His-451 serves as the catalytic For 3-hydroxyacyl-CoA dehydrogenase activity. Asn-454 contributes to the NAD(+) binding site. Substrate-binding residues include Asn-501 and Tyr-660.

The protein in the N-terminal section; belongs to the enoyl-CoA hydratase/isomerase family. This sequence in the C-terminal section; belongs to the 3-hydroxyacyl-CoA dehydrogenase family. Heterotetramer of two alpha chains (FadB) and two beta chains (FadA).

The enzyme catalyses a (3S)-3-hydroxyacyl-CoA + NAD(+) = a 3-oxoacyl-CoA + NADH + H(+). The catalysed reaction is a (3S)-3-hydroxyacyl-CoA = a (2E)-enoyl-CoA + H2O. It catalyses the reaction a 4-saturated-(3S)-3-hydroxyacyl-CoA = a (3E)-enoyl-CoA + H2O. It carries out the reaction (3S)-3-hydroxybutanoyl-CoA = (3R)-3-hydroxybutanoyl-CoA. The enzyme catalyses a (3Z)-enoyl-CoA = a 4-saturated (2E)-enoyl-CoA. The catalysed reaction is a (3E)-enoyl-CoA = a 4-saturated (2E)-enoyl-CoA. Its pathway is lipid metabolism; fatty acid beta-oxidation. In terms of biological role, involved in the aerobic and anaerobic degradation of long-chain fatty acids via beta-oxidation cycle. Catalyzes the formation of 3-oxoacyl-CoA from enoyl-CoA via L-3-hydroxyacyl-CoA. It can also use D-3-hydroxyacyl-CoA and cis-3-enoyl-CoA as substrate. The polypeptide is Fatty acid oxidation complex subunit alpha (Pseudomonas putida (Arthrobacter siderocapsulatus)).